The following is a 125-amino-acid chain: MSTAVTEGIEVTVRSTFRPERSEPGRFLFSYTVRIANQGEVPAQLVSRRWIILDANGEREEVVGDGVVGQQPHLEPGEHFEYTSFCVLKTPHGSMRGTYRMVRDGGQAFDATIAPFPLVVPGTLN.

The ApaG domain occupies 3–125; the sequence is TAVTEGIEVT…FPLVVPGTLN (123 aa).

The sequence is that of Protein ApaG from Anaeromyxobacter sp. (strain K).